The sequence spans 255 residues: 5-oxoprolinase subunit A (255 aa).

Belongs to the LamB/PxpA family. As to quaternary structure, forms a complex composed of PxpA, PxpB and PxpC.

It catalyses the reaction 5-oxo-L-proline + ATP + 2 H2O = L-glutamate + ADP + phosphate + H(+). Catalyzes the cleavage of 5-oxoproline to form L-glutamate coupled to the hydrolysis of ATP to ADP and inorganic phosphate. This Nitrobacter hamburgensis (strain DSM 10229 / NCIMB 13809 / X14) protein is 5-oxoprolinase subunit A.